A 206-amino-acid polypeptide reads, in one-letter code: FMN-dependent NADH:quinone oxidoreductase (206 aa).

FMN contacts are provided by residues 15-17 (SVS), 94-97 (MYNF), and 138-141 (TRGG).

Belongs to the azoreductase type 1 family. As to quaternary structure, homodimer. Requires FMN as cofactor.

It catalyses the reaction 2 a quinone + NADH + H(+) = 2 a 1,4-benzosemiquinone + NAD(+). The enzyme catalyses N,N-dimethyl-1,4-phenylenediamine + anthranilate + 2 NAD(+) = 2-(4-dimethylaminophenyl)diazenylbenzoate + 2 NADH + 2 H(+). Functionally, quinone reductase that provides resistance to thiol-specific stress caused by electrophilic quinones. In terms of biological role, also exhibits azoreductase activity. Catalyzes the reductive cleavage of the azo bond in aromatic azo compounds to the corresponding amines. This chain is FMN-dependent NADH:quinone oxidoreductase, found in Sinorhizobium fredii (strain NBRC 101917 / NGR234).